We begin with the raw amino-acid sequence, 32 residues long: Periplasmic [NiFe] hydrogenase small subunit (32 aa).

Residues C17 and C20 each contribute to the [4Fe-4S] cluster site.

This sequence belongs to the [NiFe]/[NiFeSe] hydrogenase small subunit family. Heterodimer of a large and a small subunit. [3Fe-4S] cluster serves as cofactor. Requires [4Fe-4S] cluster as cofactor.

It localises to the periplasm. The enzyme catalyses 2 Fe(III)-[cytochrome c3] + H2 = 2 Fe(II)-[cytochrome c3] + 2 H(+). The protein is Periplasmic [NiFe] hydrogenase small subunit (hydA) of Desulfovibrio multispirans.